The following is a 121-amino-acid chain: uncharacterized protein (121 aa).

A run of 3 helical transmembrane segments spans residues 1–21, 55–75, and 92–112; these read MILW…IMPV, LKYI…FCSI, and LFFK…IHFL.

The protein resides in the membrane. This is an uncharacterized protein from Saccharomyces cerevisiae (strain ATCC 204508 / S288c) (Baker's yeast).